The primary structure comprises 196 residues: Proteasome subunit beta (196 aa).

A propeptide (removed in mature form; by autocatalysis) is located at residue Met-1. Thr-2 functions as the Nucleophile in the catalytic mechanism.

Belongs to the peptidase T1B family. In terms of assembly, the 20S proteasome core is composed of 14 alpha and 14 beta subunits that assemble into four stacked heptameric rings, resulting in a barrel-shaped structure. The two inner rings, each composed of seven catalytic beta subunits, are sandwiched by two outer rings, each composed of seven alpha subunits. The catalytic chamber with the active sites is on the inside of the barrel. Has a gated structure, the ends of the cylinder being occluded by the N-termini of the alpha-subunits. Is capped at one or both ends by the proteasome regulatory ATPase, PAN.

The protein resides in the cytoplasm. It carries out the reaction Cleavage of peptide bonds with very broad specificity.. Its activity is regulated as follows. The formation of the proteasomal ATPase PAN-20S proteasome complex, via the docking of the C-termini of PAN into the intersubunit pockets in the alpha-rings, triggers opening of the gate for substrate entry. Interconversion between the open-gate and close-gate conformations leads to a dynamic regulation of the 20S proteasome proteolysis activity. In terms of biological role, component of the proteasome core, a large protease complex with broad specificity involved in protein degradation. In Nanoarchaeum equitans (strain Kin4-M), this protein is Proteasome subunit beta.